We begin with the raw amino-acid sequence, 354 residues long: 5,10-methenyltetrahydromethanopterin hydrogenase (354 aa).

It belongs to the HMD family.

It carries out the reaction 5,10-methenyl-5,6,7,8-tetrahydromethanopterin + H2 = 5,10-methylenetetrahydromethanopterin + H(+). It participates in one-carbon metabolism; methanogenesis from CO(2); 5,10-methylene-5,6,7,8-tetrahydromethanopterin from 5,10-methenyl-5,6,7,8-tetrahydromethanopterin (hydrogen route): step 1/1. Its function is as follows. Catalyzes the reversible reduction of methenyl-H(4)MPT(+) to methylene-H(4)MPT. In Methanococcus maripaludis (strain C7 / ATCC BAA-1331), this protein is 5,10-methenyltetrahydromethanopterin hydrogenase.